Consider the following 210-residue polypeptide: Large ribosomal subunit protein bL25 (210 aa).

The disordered stretch occupies residues 190-210; it reads LKSEGAEGGEAEAGQAEEGEE. Over residues 196–210 the composition is skewed to acidic residues; sequence EGGEAEAGQAEEGEE.

Belongs to the bacterial ribosomal protein bL25 family. CTC subfamily. In terms of assembly, part of the 50S ribosomal subunit; part of the 5S rRNA/L5/L18/L25 subcomplex. Contacts the 5S rRNA. Binds to the 5S rRNA independently of L5 and L18.

Its function is as follows. This is one of the proteins that binds to the 5S RNA in the ribosome where it forms part of the central protuberance. This is Large ribosomal subunit protein bL25 from Chelativorans sp. (strain BNC1).